Consider the following 413-residue polypeptide: Tyrosine--tRNA ligase (413 aa).

Residues 59-68 (PTAPDIHLGH) carry the 'HIGH' region motif. The short motif at 243–247 (KMSKS) is the 'KMSKS' region element. K246 contacts ATP. The S4 RNA-binding domain occupies 351 to 411 (LAIGQLLKQA…GKRRFARVTL (61 aa)).

It belongs to the class-I aminoacyl-tRNA synthetase family. TyrS type 2 subfamily. Homodimer.

The protein localises to the cytoplasm. It catalyses the reaction tRNA(Tyr) + L-tyrosine + ATP = L-tyrosyl-tRNA(Tyr) + AMP + diphosphate + H(+). Its function is as follows. Catalyzes the attachment of tyrosine to tRNA(Tyr) in a two-step reaction: tyrosine is first activated by ATP to form Tyr-AMP and then transferred to the acceptor end of tRNA(Tyr). This is Tyrosine--tRNA ligase from Burkholderia pseudomallei (strain K96243).